A 382-amino-acid chain; its full sequence is Nonsense-mediated mRNA decay factor SMG9 (382 aa).

Positions 1-66 (MKKVEILKTP…PDSSVSKSSG (66 aa)) are disordered.

It belongs to the SMG9 family.

Functionally, involved in nonsense-mediated decay (NMD) of mRNAs containing premature stop codons. Probable component of kinase complex containing smg-1 and recruited to stalled ribosomes. This Caenorhabditis briggsae protein is Nonsense-mediated mRNA decay factor SMG9 (smg-9).